Reading from the N-terminus, the 348-residue chain is Protein RecA (348 aa).

65 to 72 (GPESSGKT) is an ATP binding site.

Belongs to the RecA family.

It localises to the cytoplasm. Can catalyze the hydrolysis of ATP in the presence of single-stranded DNA, the ATP-dependent uptake of single-stranded DNA by duplex DNA, and the ATP-dependent hybridization of homologous single-stranded DNAs. It interacts with LexA causing its activation and leading to its autocatalytic cleavage. The protein is Protein RecA of Enterococcus gallinarum.